A 169-amino-acid chain; its full sequence is Peptide methionine sulfoxide reductase MsrA (169 aa).

Residue C13 is part of the active site.

It belongs to the MsrA Met sulfoxide reductase family.

The catalysed reaction is L-methionyl-[protein] + [thioredoxin]-disulfide + H2O = L-methionyl-(S)-S-oxide-[protein] + [thioredoxin]-dithiol. The enzyme catalyses [thioredoxin]-disulfide + L-methionine + H2O = L-methionine (S)-S-oxide + [thioredoxin]-dithiol. Functionally, has an important function as a repair enzyme for proteins that have been inactivated by oxidation. Catalyzes the reversible oxidation-reduction of methionine sulfoxide in proteins to methionine. In Mycolicibacterium gilvum (strain PYR-GCK) (Mycobacterium gilvum (strain PYR-GCK)), this protein is Peptide methionine sulfoxide reductase MsrA.